The following is a 3059-amino-acid chain: Genome polyprotein (3059 aa).

A Peptidase S30 domain is found at 154–298; that stretch reads GVTPYSVQQL…ESTMLSTHHY (145 aa). Residues H207, D216, and S249 each act as for P1 proteinase activity in the active site. The short motif at 349–352 is the Involved in interaction with stylet and aphid transmission element; that stretch reads KITC. Positions 607–609 match the Involved in virions binding and aphid transmission motif; it reads PTK. In terms of domain architecture, Peptidase C6 spans 633 to 755; the sequence is MYIAKSGYCY…DSEMKHYRVG (123 aa). Active-site for helper component proteinase activity residues include C641 and H714. One can recognise a Helicase ATP-binding domain in the interval 1226–1378; it reads QIAHDLHTDI…TQYPVEIRVE (153 aa). 1239-1246 contributes to the ATP binding site; sequence GAVGSGKS. Positions 1328–1331 match the DEFH box motif; it reads DEFH. Residues 1397-1556 form the Helicase C-terminal domain; it reads DLTSKCDNLL…GLPISTQSVT (160 aa). The short motif at 1883 to 1890 is the Nuclear localization signal element; it reads KKGKTKGK. Y1905 carries the post-translational modification O-(5'-phospho-RNA)-tyrosine. The 219-residue stretch at 2032-2250 folds into the Peptidase C4 domain; that stretch reads STSMFRGVRD…VCWGSFHLQD (219 aa). Active-site for nuclear inclusion protein A activity residues include H2077, D2112, and C2182. Positions 2516–2640 constitute a RdRp catalytic domain; that stretch reads WVYCDADGSQ…AIRPDMEHKL (125 aa). Residue T3042 is modified to Phosphothreonine.

This sequence belongs to the potyviridae genome polyprotein family. In terms of assembly, interacts with host eIF4E protein (via cap-binding region); this interaction mediates the translation of the VPg-viral RNA conjugates. Part of a complex that comprises VPg, RNA, host EIF4E and EIF4G; this interaction mediates the translation of the VPg-viral RNA conjugates. In terms of processing, VPg is uridylylated by the polymerase and is covalently attached to the 5'-end of the genomic RNA. This uridylylated form acts as a nucleotide-peptide primer for the polymerase. Phosphorylation inhibits the RNA-binding capacity of the capsid protein. Post-translationally, potyviral RNA is expressed as two polyproteins which undergo post-translational proteolytic processing. Genome polyprotein is processed by NIa-pro, P1 and HC-pro proteinases resulting in the production of at least ten individual proteins. P3N-PIPO polyprotein is cleaved by P1 and HC-pro proteinases resulting in the production of three individual proteins. The P1 proteinase and the HC-pro cleave only their respective C-termini autocatalytically. 6K1 is essential for proper proteolytic separation of P3 from CI.

The protein resides in the host cytoplasmic vesicle. Its subcellular location is the host nucleus. It is found in the virion. The catalysed reaction is RNA(n) + a ribonucleoside 5'-triphosphate = RNA(n+1) + diphosphate. The enzyme catalyses Hydrolyzes glutaminyl bonds, and activity is further restricted by preferences for the amino acids in P6 - P1' that vary with the species of potyvirus, e.g. Glu-Xaa-Xaa-Tyr-Xaa-Gln-|-(Ser or Gly) for the enzyme from tobacco etch virus. The natural substrate is the viral polyprotein, but other proteins and oligopeptides containing the appropriate consensus sequence are also cleaved.. It catalyses the reaction Hydrolyzes a Gly-|-Gly bond at its own C-terminus, commonly in the sequence -Tyr-Xaa-Val-Gly-|-Gly, in the processing of the potyviral polyprotein.. Functionally, required for aphid transmission and also has proteolytic activity. Only cleaves a Gly-Gly dipeptide at its own C-terminus. Interacts with virions and aphid stylets. Acts as a suppressor of RNA-mediated gene silencing, also known as post-transcriptional gene silencing (PTGS), a mechanism of plant viral defense that limits the accumulation of viral RNAs. May have RNA-binding activity. In terms of biological role, has helicase activity. It may be involved in replication. Indispensable for virus replication. Reduces the abundance of host transcripts related to jasmonic acid biosynthesis therefore altering the host defenses. In order to increase its own stability, decreases host protein degradation pathways. Its function is as follows. Indispensable for virus replication. Functionally, mediates the cap-independent, EIF4E-dependent translation of viral genomic RNAs. Binds to the cap-binding site of host EIF4E and thus interferes with the host EIF4E-dependent mRNA export and translation. VPg-RNA directly binds EIF4E and is a template for transcription. Also forms trimeric complexes with EIF4E-EIF4G, which are templates for translation. In terms of biological role, has RNA-binding and proteolytic activities. An RNA-dependent RNA polymerase that plays an essential role in the virus replication. Its function is as follows. Involved in aphid transmission, cell-to-cell and systemis movement, encapsidation of the viral RNA and in the regulation of viral RNA amplification. In Potato virus A (PVA), this protein is Genome polyprotein.